Here is a 136-residue protein sequence, read N- to C-terminus: Cytochrome c oxidase subunit 13, mitochondrial (136 aa).

The N-terminal 29 residues, 1-29, are a transit peptide targeting the mitochondrion; that stretch reads MFAQRQMFFARLAANLRAPAVRQTVQRRF. At 30–62 the chain is on the mitochondrial matrix side; sequence ASTPANESGKNAFVREREAVKQHAAETTELWRK. The helical transmembrane segment at 63–83 threads the bilayer; the sequence is ISLYGIPPALALAGYNAYTLY. Residues 84 to 136 lie on the Mitochondrial intermembrane side of the membrane; the sequence is NEHWEHWSHLPPLEERTEYPYQNIRTRNYPWGDGDKTLFWNESVNYHNRDKVT.

Belongs to the cytochrome c oxidase subunit 6A family. As to quaternary structure, component of the cytochrome c oxidase (complex IV, CIV), a multisubunit enzyme composed of 11 subunits. The complex is composed of a catalytic core of 3 subunits Cox1, Cox2 and Cox3, encoded in the mitochondrial DNA, and 8 supernumerary subunits Cox4, Cox5a/Cox5, Cox6, Cox7, Cox8, Cox7a/Cox9, Cox6b/Cox12 and Cox6a/Cox13, which are encoded in the nuclear genome. The complex exists as a monomer or a dimer and forms respiratory supercomplexes (SCs) in the inner mitochondrial membrane with NADH-ubiquinone oxidoreductase (complex I, CI) and ubiquinol-cytochrome c oxidoreductase (cytochrome b-c1 complex, complex III, CIII), resulting in various different assemblies (supercomplexes I(1)IV(1), I(1)III(3)IV(2), III(2)IV(1) and III(2)IV(2) as well as larger supercomplexes of compositions like I(1)III(2)IV(5-6)). Cox6a/Cox13 was not present in the cryo-EM structure. It may be involved in complex IV dimer formation and might not be always expressed. This would explain its absence in the map of the isolated monomer.

It localises to the mitochondrion inner membrane. It participates in energy metabolism; oxidative phosphorylation. Functionally, component of the cytochrome c oxidase, the last enzyme in the mitochondrial electron transport chain which drives oxidative phosphorylation. The respiratory chain contains 3 multisubunit complexes succinate dehydrogenase (complex II, CII), ubiquinol-cytochrome c oxidoreductase (cytochrome b-c1 complex, complex III, CIII) and cytochrome c oxidase (complex IV, CIV), that cooperate to transfer electrons derived from NADH and succinate to molecular oxygen, creating an electrochemical gradient over the inner membrane that drives transmembrane transport and the ATP synthase. Cytochrome c oxidase is the component of the respiratory chain that catalyzes the reduction of oxygen to water. Electrons originating from reduced cytochrome c in the intermembrane space (IMS) are transferred via the dinuclear copper A center (CU(A)) of Cox2 and heme A of Cox1 to the active site in Cox1, a binuclear center (BNC) formed by heme A3 and copper B (CU(B)). The BNC reduces molecular oxygen to 2 water molecules using 4 electrons from cytochrome c in the IMS and 4 protons from the mitochondrial matrix. This chain is Cytochrome c oxidase subunit 13, mitochondrial (eat-5), found in Neurospora crassa (strain ATCC 24698 / 74-OR23-1A / CBS 708.71 / DSM 1257 / FGSC 987).